The chain runs to 128 residues: Ribonuclease P protein component (128 aa).

This sequence belongs to the RnpA family. As to quaternary structure, consists of a catalytic RNA component (M1 or rnpB) and a protein subunit.

The enzyme catalyses Endonucleolytic cleavage of RNA, removing 5'-extranucleotides from tRNA precursor.. Its function is as follows. RNaseP catalyzes the removal of the 5'-leader sequence from pre-tRNA to produce the mature 5'-terminus. It can also cleave other RNA substrates such as 4.5S RNA. The protein component plays an auxiliary but essential role in vivo by binding to the 5'-leader sequence and broadening the substrate specificity of the ribozyme. The sequence is that of Ribonuclease P protein component from Prochlorococcus marinus (strain MIT 9312).